The primary structure comprises 298 residues: MALVNDHPNETNYLSKQNSSSSEDLSSPGLDQPDAAYAGGGGGGGSASSSSTMNSDHQQHQGFVFYPSGEDHHNSLMDFNGSSFLNFDHHESFPPPAISCGGSSGGGGFSFLEGNNMSYGFTNWNHQHHMDIISPRSTETPQGQKDWLYSDSTVVTTGSRNESLSPKSAGNKRSHTGESTQPSKKLSSGVTGKTKPKPTTSPKDPQSLAAKNRRERISERLKILQELVPNGTKVDLVTMLEKAISYVKFLQVQVKVLATDEFWPAQGGKAPDISQVKDAIDAILSSSQRDRNSNLITN.

2 disordered regions span residues 1–58 (MALV…SDHQ) and 157–213 (TGSR…AKNR). Positions 15-27 (SKQNSSSSEDLSS) are enriched in low complexity. Polar residues-rich tracts occupy residues 157 to 168 (TGSRNESLSPKS) and 177 to 190 (GEST…SSGV). The segment covering 191–205 (TGKTKPKPTTSPKDP) has biased composition (low complexity). Residues 201–214 (SPKDPQSLAAKNRR) form a basic motif region. The bHLH domain maps to 201–250 (SPKDPQSLAAKNRRERISERLKILQELVPNGTKVDLVTMLEKAISYVKFL). The interval 215–250 (ERISERLKILQELVPNGTKVDLVTMLEKAISYVKFL) is helix-loop-helix motif.

As to quaternary structure, homodimer. Forms heterodimers with RSL1. Interacts with TIFY10B/JAZ2, TIFY6A/JAZ4, TIFY5A/JAZ8, TIFY7/JAZ9 and TIFY9/JAZ10. As to expression, expressed constitutively in flowers. Expressed in root epidermal hair cells.

The protein localises to the nucleus. Functionally, transcription factor that is specifically required for the development of root hairs. Acts with RSL1 to positively regulate root hair development. Acts downstream of genes that regulate epidermal pattern formation, such as GL2. Targets directly RSL4, another transcription factor involved in the regulation of root hair elongation. Acts with RSL1 as transcription factor that integrates a jasmonate (JA) signaling pathway that stimulates root hair growth. The protein is Transcription factor RHD6 of Arabidopsis thaliana (Mouse-ear cress).